A 492-amino-acid polypeptide reads, in one-letter code: 2,3-bisphosphoglycerate-independent phosphoglycerate mutase (492 aa).

Mn(2+)-binding residues include Asp-11 and Ser-61. Ser-61 serves as the catalytic Phosphoserine intermediate. Substrate is bound by residues His-118, 147–148 (RD), Arg-178, Arg-184, 248–251 (RNDR), and Lys-320. The Mn(2+) site is built by Asp-386, His-390, Asp-427, His-428, and His-445.

The protein belongs to the BPG-independent phosphoglycerate mutase family. As to quaternary structure, monomer. Requires Mn(2+) as cofactor.

The enzyme catalyses (2R)-2-phosphoglycerate = (2R)-3-phosphoglycerate. It functions in the pathway carbohydrate degradation; glycolysis; pyruvate from D-glyceraldehyde 3-phosphate: step 3/5. Its function is as follows. Catalyzes the interconversion of 2-phosphoglycerate and 3-phosphoglycerate. The chain is 2,3-bisphosphoglycerate-independent phosphoglycerate mutase from Campylobacter jejuni subsp. jejuni serotype O:23/36 (strain 81-176).